Reading from the N-terminus, the 703-residue chain is WD repeat-containing protein pop2 (703 aa).

3 stretches are compositionally biased toward polar residues: residues 1–27 (MSLS…SSSP), 63–73 (ESNSCNGNTSS), and 156–178 (SISS…TVSP). 2 disordered regions span residues 1-73 (MSLS…NTSS) and 156-180 (SISS…SPGS). The interval 1–170 (MSLSRCPTDN…SDNFPPSPKV (170 aa)) is interaction with pop1. Residues 236–283 (KDILSNLPFSIVQSILLNLDIHSFLSCRLVSPTWNRILDVHTSYWKHM) form the F-box domain. WD repeat units lie at residues 389-417 (GHKE…RVWN), 429-473 (GHIS…RVWK), 505-533 (GHTD…RIWR), 545-575 (GHSL…RVWD), 587-615 (GHDA…RIWD), and 625-654 (LPSN…KLWD).

In terms of assembly, homodimer and heterodimer with pop1. Binds to cul1, pip1 and phosphorylated cdc18.

It localises to the cytoplasm. The protein localises to the nucleus. Its function is as follows. Involved in maintenance of ploidy through proteasome dependent degradation of CDK inhibitor rum1 and S-phase initiator cdc18. Functions as a recognition factor for rum1 and cdc18, which are subsequently ubiquitinated and targeted to the 26S proteasome for degradation. Together with pop1, required for cig2 instability during G2 and M phase and cig2 degradation in exponentially growing cells. The sequence is that of WD repeat-containing protein pop2 (pop2) from Schizosaccharomyces pombe (strain 972 / ATCC 24843) (Fission yeast).